A 195-amino-acid polypeptide reads, in one-letter code: uncharacterized protein (195 aa).

2 disordered regions span residues 1-51 (MTHN…GPSY) and 160-195 (SYSQ…KSCN). The span at 13 to 28 (SYQNQAPQPQYYTRQP) shows a compositional bias: polar residues. Residues 170–189 (YYKKHKHHSHHRPKHVKSSR) are compositionally biased toward basic residues.

This is an uncharacterized protein from Acanthamoeba polyphaga mimivirus (APMV).